The following is a 181-amino-acid chain: MKGGKRTQKAADKNRINEQITGVDEVRLIGTDGEQAGVVSINEALDAAAEAGVDLVEMSPNAEPPVCRLMDYGKFLFEKSKEQKEQKKKQKQIQVKEVKFRPGTDEGDYQVKLRNLRRFLEGGDKTKVTIRFRGREMAHQELGIELLNRVKNDLEEISIVESFPRRAEGRQMIMVLAPNKK.

Belongs to the IF-3 family. Monomer.

The protein localises to the cytoplasm. Its function is as follows. IF-3 binds to the 30S ribosomal subunit and shifts the equilibrium between 70S ribosomes and their 50S and 30S subunits in favor of the free subunits, thus enhancing the availability of 30S subunits on which protein synthesis initiation begins. The polypeptide is Translation initiation factor IF-3 (Idiomarina loihiensis (strain ATCC BAA-735 / DSM 15497 / L2-TR)).